Here is an 845-residue protein sequence, read N- to C-terminus: ATPase morc-1 (845 aa).

ATP-binding positions include Asn43, 88–90 (SAK), and 97–103 (RYGNGLK). Asn43 is a binding site for Mg(2+). Residues 284–311 (AAYNKILDEKNETVKKCEEEKALVMSEI) adopt a coiled-coil conformation. Lys422 is an ATP binding site. Disordered stretches follow at residues 566–590 (LPQK…SASS) and 628–739 (KMEP…GKAV). A compositionally biased stretch (low complexity) spans 574-590 (SAPSSSDSQNSIRSASS). Residues 637–646 (HDSHIAEVQR) show a composition bias toward basic and acidic residues.

In terms of assembly, predominantly forms monomers and dimers, but multimerizes to form trimers and tetramers upon DNA binding. In terms of tissue distribution, expressed in germline and somatic cells.

The protein localises to the nucleus. It is found in the nuclear body. The catalysed reaction is ATP + H2O = ADP + phosphate + H(+). Functionally, binds non-specifically to DNA and forms static foci which grow by recruiting other morc-1 molecules, and thereby stimulates conformational changes and compaction of DNA, which appears to be enhanced by ATP-binding, but does not require ATP activity. Preferentially binds to long DNAs. Compacts and entraps segments of DNA by sequentially forming loops along the DNA, beginning at the free ends of single- and double-tethered DNA. Does not extrude the DNA loops on compacted double-tethered DNA. Involved in gene silencing. Plays a role in germline RNA interference (RNAi), and in particular, the silencing of endogenous small interfering RNA (endo-siRNA) target genes. May play a role in heterochromatin localization and condensation, and the siRNAi-directed trimethylation of 'Lys-9' of histone H3 in hermaphrodite X chromosomes. Promotes transgenerational epigenetic inheritance and germline immortality. The protein is ATPase morc-1 of Caenorhabditis elegans.